A 356-amino-acid chain; its full sequence is Outer membrane protein Omp38 (356 aa).

A signal peptide spans 1–19; the sequence is MKLSRIALATMLVAAPLAA. The OmpA-like domain occupies 221 to 339; that stretch reads ELTEDLNMEL…RVFATITGSR (119 aa).

Belongs to the outer membrane OOP (TC 1.B.6) superfamily. In terms of assembly, homotrimer.

It is found in the cell outer membrane. Porin. Induces apoptosis in human cells through caspases-dependent and AIF-dependent pathways. Purified Omp38 enters the cells and localizes to the mitochondria, which leads to a release of proapoptotic molecules such as cytochrome c and AIF (apoptosis-inducing factor). The polypeptide is Outer membrane protein Omp38 (omp38) (Acinetobacter baumannii (strain ATCC 17978 / DSM 105126 / CIP 53.77 / LMG 1025 / NCDC KC755 / 5377)).